We begin with the raw amino-acid sequence, 292 residues long: MEFTDLQIFIHLSDTKNFTKTATQNHMSPSTLSRQIQRLEDELGKTLFIRDNRQVKLTEYGEKFLQFAKTEWQNWQQFKQQLKDESDELCGEIKLFCSVTASYSHLPHVLKEFRQRYPKVEIQLTTGDPALALELIQAQQVDLALAGKPNNLPSSVVFHKIDDISLSLIAPRVACLATQLLQEKPIDWQQMPFIFPVEGHARQRIEQWLREKQIKHPKIYATVAGHEGIVPMVGLGFGLAMLPDAVIDSSPMNNQISRLNLDKPIEPFELGICTQKRNLEQPLVRAFWAMLE.

The 58-residue stretch at 1–58 folds into the HTH lysR-type domain; it reads MEFTDLQIFIHLSDTKNFTKTATQNHMSPSTLSRQIQRLEDELGKTLFIRDNRQVKLT. Residues 18–37 constitute a DNA-binding region (H-T-H motif); that stretch reads FTKTATQNHMSPSTLSRQIQ.

The protein belongs to the LysR transcriptional regulatory family.

Its subcellular location is the cytoplasm. This protein activates the transcription of the ilvC gene in the presence of acetolactate or acetohydroxybutyrate. IlvY is also a negative regulator of its own expression. The chain is HTH-type transcriptional activator IlvY (ilvY) from Haemophilus influenzae (strain ATCC 51907 / DSM 11121 / KW20 / Rd).